The sequence spans 219 residues: Protein-L-isoaspartate O-methyltransferase 1 (219 aa).

S67 is a catalytic residue.

The protein belongs to the methyltransferase superfamily. L-isoaspartyl/D-aspartyl protein methyltransferase family.

Its subcellular location is the cytoplasm. It carries out the reaction [protein]-L-isoaspartate + S-adenosyl-L-methionine = [protein]-L-isoaspartate alpha-methyl ester + S-adenosyl-L-homocysteine. Its function is as follows. Catalyzes the methyl esterification of L-isoaspartyl residues in peptides and proteins that result from spontaneous decomposition of normal L-aspartyl and L-asparaginyl residues. It plays a role in the repair and/or degradation of damaged proteins. In Geotalea uraniireducens (strain Rf4) (Geobacter uraniireducens), this protein is Protein-L-isoaspartate O-methyltransferase 1.